The following is a 389-amino-acid chain: Phenylpropanoylacetyl-CoA synthase (389 aa).

Cys-163 is an active-site residue.

This sequence belongs to the thiolase-like superfamily. Chalcone/stilbene synthases family. In terms of assembly, homodimer. Expressed in both the leaf and rhizome, with higher expression in the rhizome.

The enzyme catalyses (E)-feruloyl-CoA + malonyl-CoA + H(+) = (E)-feruloylacetyl-CoA + CO2 + CoA. It carries out the reaction 4-coumaroyl-CoA + malonyl-CoA + H(+) = (4-coumaroyl)acetyl-CoA + CO2 + CoA. It participates in secondary metabolite biosynthesis; flavonoid biosynthesis. Catalyzes the formation of feruloyldiketide-CoA by condensing feruloyl-CoA and malonyl-CoA in the curcuminoid biosynthesis. Has no activity with cinnamoyl-CoA. The protein is Phenylpropanoylacetyl-CoA synthase (DCS) of Curcuma longa (Turmeric).